We begin with the raw amino-acid sequence, 325 residues long: Glutarate 2-hydroxylase (325 aa).

Residues H160, D162, and H292 each contribute to the Fe cation site.

It belongs to the glutarate hydroxylase family. In terms of assembly, homotetramer. Fe(2+) is required as a cofactor.

The enzyme catalyses glutarate + 2-oxoglutarate + O2 = (S)-2-hydroxyglutarate + succinate + CO2. It functions in the pathway amino-acid degradation. Functionally, acts as an alpha-ketoglutarate-dependent dioxygenase catalyzing hydroxylation of glutarate (GA) to L-2-hydroxyglutarate (L2HG). Functions in a L-lysine degradation pathway that proceeds via cadaverine, glutarate and L-2-hydroxyglutarate. The sequence is that of Glutarate 2-hydroxylase from Salmonella newport (strain SL254).